Consider the following 401-residue polypeptide: MAAATVTVEEVRKAQRATGPATVLAIGTATPANCVHQADYPDYYFRITKSEHMTELKEKFKRMCDKSQIRKRYMHLTEEYLAENPNMCAYMAPSLDARQDIVVVEVPKLGKAAAQKAIKEWGQPKSKITHLVFCTTSGVDMPGADYQLTKMLGLRPSVKRLMMYQQGCFAGGTVLRVAKDLAENNRGARVLVVCSEITAVTFRGPSESHLDSMVGQALFGDGAAAVIVGADPDERVERPLFQLVSASQTILPDSEGAIDGHLREVGLTFHLLKDVPGLISKNIERSLEEAFKPLGITDYNSIFWVAHPGGPAILDQVEAKVGLKKERMRATRHVLSEYGNMSSACVLFILDEMRKRSAEDGQATTGEGLDWGVLFGFGPGLTVETVVLHSVPITTGAAITA.

Cysteine 168 is a catalytic residue.

Belongs to the thiolase-like superfamily. Chalcone/stilbene synthases family.

The enzyme catalyses (E)-4-coumaroyl-CoA + 3 malonyl-CoA + 3 H(+) = 2',4,4',6'-tetrahydroxychalcone + 3 CO2 + 4 CoA. It participates in secondary metabolite biosynthesis; flavonoid biosynthesis. The primary product of this enzyme is 4,2',4',6'-tetrahydroxychalcone (also termed naringenin-chalcone or chalcone) which can under specific conditions spontaneously isomerize into naringenin. The polypeptide is Chalcone synthase 4 (CHS4) (Sorghum bicolor (Sorghum)).